Consider the following 221-residue polypeptide: UPF0758 protein Ent638_0101 (221 aa).

The region spanning 99–221 (PLLSPEMTKD…YVSFAEQGWI (123 aa)) is the MPN domain. Zn(2+) is bound by residues histidine 170, histidine 172, and aspartate 183. A JAMM motif motif is present at residues 170 to 183 (HNHPSGCAEPSKAD).

The protein belongs to the UPF0758 family. YicR subfamily.

This Enterobacter sp. (strain 638) protein is UPF0758 protein Ent638_0101.